A 527-amino-acid chain; its full sequence is GMP synthase [glutamine-hydrolyzing] (527 aa).

In terms of domain architecture, Glutamine amidotransferase type-1 spans 4-202 (KILILDFGSQ…VLQICGARAD (199 aa)). The active-site Nucleophile is Cys81. Active-site residues include His176 and Glu178. In terms of domain architecture, GMPS ATP-PPase spans 203 to 395 (WEMGNYIDEA…LGLPPAMVYR (193 aa)). 230–236 (SGGVDSS) lines the ATP pocket.

As to quaternary structure, homodimer.

The enzyme catalyses XMP + L-glutamine + ATP + H2O = GMP + L-glutamate + AMP + diphosphate + 2 H(+). It functions in the pathway purine metabolism; GMP biosynthesis; GMP from XMP (L-Gln route): step 1/1. Its function is as follows. Catalyzes the synthesis of GMP from XMP. This Paraburkholderia phytofirmans (strain DSM 17436 / LMG 22146 / PsJN) (Burkholderia phytofirmans) protein is GMP synthase [glutamine-hydrolyzing].